A 131-amino-acid polypeptide reads, in one-letter code: Sec-independent protein translocase protein TatB (131 aa).

Residues 2 to 22 (FANIGWWEMLVLVMVGLVVLG) form a helical membrane-spanning segment. Residues 90 to 131 (DSLFTGDFDRPTPKKPDAAGSAGPDATEQIGAGPIPFDSDAT) are disordered. Residues 96–106 (DFDRPTPKKPD) show a composition bias toward basic and acidic residues.

This sequence belongs to the TatB family. As to quaternary structure, the Tat system comprises two distinct complexes: a TatABC complex, containing multiple copies of TatA, TatB and TatC subunits, and a separate TatA complex, containing only TatA subunits. Substrates initially bind to the TatABC complex, which probably triggers association of the separate TatA complex to form the active translocon.

The protein resides in the cell membrane. In terms of biological role, part of the twin-arginine translocation (Tat) system that transports large folded proteins containing a characteristic twin-arginine motif in their signal peptide across membranes. Together with TatC, TatB is part of a receptor directly interacting with Tat signal peptides. TatB may form an oligomeric binding site that transiently accommodates folded Tat precursor proteins before their translocation. This chain is Sec-independent protein translocase protein TatB, found in Mycobacterium tuberculosis (strain ATCC 25177 / H37Ra).